A 492-amino-acid polypeptide reads, in one-letter code: Catalase isozyme 2 (492 aa).

Catalysis depends on residues His65 and Asn138. Tyr348 lines the heme pocket.

It belongs to the catalase family. As to quaternary structure, homotetramer. Heme is required as a cofactor.

It localises to the peroxisome. The catalysed reaction is 2 H2O2 = O2 + 2 H2O. In terms of biological role, occurs in almost all aerobically respiring organisms and serves to protect cells from the toxic effects of hydrogen peroxide. This chain is Catalase isozyme 2 (CAT2), found in Gossypium hirsutum (Upland cotton).